Reading from the N-terminus, the 300-residue chain is ATP synthase gamma chain (300 aa).

The protein belongs to the ATPase gamma chain family. F-type ATPases have 2 components, CF(1) - the catalytic core - and CF(0) - the membrane proton channel. CF(1) has five subunits: alpha(3), beta(3), gamma(1), delta(1), epsilon(1). CF(0) has three main subunits: a, b and c.

Its subcellular location is the cell membrane. In terms of biological role, produces ATP from ADP in the presence of a proton gradient across the membrane. The gamma chain is believed to be important in regulating ATPase activity and the flow of protons through the CF(0) complex. This is ATP synthase gamma chain from Enterococcus hirae (strain ATCC 9790 / DSM 20160 / JCM 8729 / LMG 6399 / NBRC 3181 / NCIMB 6459 / NCDO 1258 / NCTC 12367 / WDCM 00089 / R).